The primary structure comprises 449 residues: Anther-specific proline-rich protein APG (449 aa).

A compositionally biased stretch (pro residues) spans P1–P118. A disordered region spans residues P1–I123. S132 (nucleophile) is an active-site residue. Active-site residues include D425 and H428.

The protein belongs to the 'GDSL' lipolytic enzyme family. Found in anther, only in male fertile plants.

This is Anther-specific proline-rich protein APG (APG) from Brassica napus (Rape).